We begin with the raw amino-acid sequence, 337 residues long: Lipoyl synthase (337 aa).

Residues Cys81, Cys86, Cys92, Cys107, Cys111, Cys114, and Ser323 each contribute to the [4Fe-4S] cluster site. In terms of domain architecture, Radical SAM core spans 93-312 (FSHGTATFMI…EEYGNALGFS (220 aa)).

The protein belongs to the radical SAM superfamily. Lipoyl synthase family. It depends on [4Fe-4S] cluster as a cofactor.

The protein localises to the cytoplasm. The catalysed reaction is [[Fe-S] cluster scaffold protein carrying a second [4Fe-4S](2+) cluster] + N(6)-octanoyl-L-lysyl-[protein] + 2 oxidized [2Fe-2S]-[ferredoxin] + 2 S-adenosyl-L-methionine + 4 H(+) = [[Fe-S] cluster scaffold protein] + N(6)-[(R)-dihydrolipoyl]-L-lysyl-[protein] + 4 Fe(3+) + 2 hydrogen sulfide + 2 5'-deoxyadenosine + 2 L-methionine + 2 reduced [2Fe-2S]-[ferredoxin]. It participates in protein modification; protein lipoylation via endogenous pathway; protein N(6)-(lipoyl)lysine from octanoyl-[acyl-carrier-protein]: step 2/2. In terms of biological role, catalyzes the radical-mediated insertion of two sulfur atoms into the C-6 and C-8 positions of the octanoyl moiety bound to the lipoyl domains of lipoate-dependent enzymes, thereby converting the octanoylated domains into lipoylated derivatives. The sequence is that of Lipoyl synthase from Xanthomonas campestris pv. campestris (strain 8004).